The following is a 750-amino-acid chain: Catalase-peroxidase 1 (750 aa).

The segment at residues 90-238 (WHSAGTYRVM…VSAAHMGLIY (149 aa)) is a cross-link (tryptophyl-tyrosyl-methioninium (Trp-Tyr) (with M-264)). Catalysis depends on histidine 91, which acts as the Proton acceptor. A disordered region spans residues 199–218 (NEGHKESGVIDGSESKKGHK). Over residues 200–218 (EGHKESGVIDGSESKKGHK) the composition is skewed to basic and acidic residues. Residues 238-264 (YVNPEGPDGIPDPVAAARDIRTTFSRM) constitute a cross-link (tryptophyl-tyrosyl-methioninium (Tyr-Met) (with W-90)). Histidine 279 contributes to the heme b binding site.

It belongs to the peroxidase family. Peroxidase/catalase subfamily. In terms of assembly, homodimer or homotetramer. Predominantly homodimeric. It depends on heme b as a cofactor. Formation of the three residue Trp-Tyr-Met cross-link is important for the catalase, but not the peroxidase activity of the enzyme.

Its subcellular location is the cytoplasm. It catalyses the reaction H2O2 + AH2 = A + 2 H2O. The catalysed reaction is 2 H2O2 = O2 + 2 H2O. Functionally, bifunctional enzyme with both catalase and broad-spectrum peroxidase activity. The chain is Catalase-peroxidase 1 from Pyricularia oryzae (strain 70-15 / ATCC MYA-4617 / FGSC 8958) (Rice blast fungus).